The chain runs to 419 residues: Imidazolonepropionase (419 aa).

Residues His-84 and His-86 each contribute to the Fe(3+) site. Zn(2+)-binding residues include His-84 and His-86. Arg-93, Tyr-156, and His-189 together coordinate 4-imidazolone-5-propanoate. Tyr-156 contacts N-formimidoyl-L-glutamate. Residue His-254 coordinates Fe(3+). Residue His-254 coordinates Zn(2+). Gln-257 provides a ligand contact to 4-imidazolone-5-propanoate. Asp-329 lines the Fe(3+) pocket. Asp-329 contacts Zn(2+). N-formimidoyl-L-glutamate-binding residues include Asn-331 and Gly-333. 4-imidazolone-5-propanoate is bound at residue Thr-334.

This sequence belongs to the metallo-dependent hydrolases superfamily. HutI family. Monomer. Forms a tightly packed homodimer in the crystal, but this seems to be an artifact of crystallization. Requires Zn(2+) as cofactor. Fe(3+) serves as cofactor.

The protein resides in the cytoplasm. The catalysed reaction is 4-imidazolone-5-propanoate + H2O = N-formimidoyl-L-glutamate. It functions in the pathway amino-acid degradation; L-histidine degradation into L-glutamate; N-formimidoyl-L-glutamate from L-histidine: step 3/3. Catalyzes the hydrolytic cleavage of the carbon-nitrogen bond in imidazolone-5-propanoate to yield N-formimidoyl-L-glutamate. It is the third step in the universal histidine degradation pathway. The sequence is that of Imidazolonepropionase from Agrobacterium fabrum (strain C58 / ATCC 33970) (Agrobacterium tumefaciens (strain C58)).